The sequence spans 205 residues: Ribonuclease HII (205 aa).

The region spanning 1–203 (MKAGIDEAGK…VSNLRQKTLD (203 aa)) is the RNase H type-2 domain. A divalent metal cation contacts are provided by aspartate 6 and glutamate 7. A substrate-binding site is contributed by arginine 46. Aspartate 101 contributes to the a divalent metal cation binding site. Residues lysine 143, arginine 146, and tyrosine 164 each coordinate substrate.

This sequence belongs to the RNase HII family. Requires Mn(2+) as cofactor. Mg(2+) is required as a cofactor.

The protein resides in the cytoplasm. It carries out the reaction Endonucleolytic cleavage to 5'-phosphomonoester.. In terms of biological role, endonuclease that specifically degrades the RNA of RNA-DNA hybrids. The chain is Ribonuclease HII (rnhB) from Archaeoglobus fulgidus (strain ATCC 49558 / DSM 4304 / JCM 9628 / NBRC 100126 / VC-16).